A 52-amino-acid polypeptide reads, in one-letter code: Sperm protamine P1 (52 aa).

Belongs to the protamine P1 family. In terms of assembly, cross-linked by interchain disulfide bonds around the DNA-helix. In terms of tissue distribution, testis.

It localises to the nucleus. The protein localises to the chromosome. In terms of biological role, protamines substitute for histones in the chromatin of sperm during the haploid phase of spermatogenesis. They compact sperm DNA into a highly condensed, stable and inactive complex. The polypeptide is Sperm protamine P1 (PRM1) (Alouatta seniculus (Red howler monkey)).